The primary structure comprises 155 residues: SsrA-binding protein (155 aa).

It belongs to the SmpB family.

Its subcellular location is the cytoplasm. In terms of biological role, required for rescue of stalled ribosomes mediated by trans-translation. Binds to transfer-messenger RNA (tmRNA), required for stable association of tmRNA with ribosomes. tmRNA and SmpB together mimic tRNA shape, replacing the anticodon stem-loop with SmpB. tmRNA is encoded by the ssrA gene; the 2 termini fold to resemble tRNA(Ala) and it encodes a 'tag peptide', a short internal open reading frame. During trans-translation Ala-aminoacylated tmRNA acts like a tRNA, entering the A-site of stalled ribosomes, displacing the stalled mRNA. The ribosome then switches to translate the ORF on the tmRNA; the nascent peptide is terminated with the 'tag peptide' encoded by the tmRNA and targeted for degradation. The ribosome is freed to recommence translation, which seems to be the essential function of trans-translation. The chain is SsrA-binding protein from Oenococcus oeni (strain ATCC BAA-331 / PSU-1).